The sequence spans 310 residues: Probable deoxyhypusine synthase (310 aa).

The active-site Nucleophile is K284.

Belongs to the deoxyhypusine synthase family. It depends on NAD(+) as a cofactor.

The catalysed reaction is [eIF5A protein]-L-lysine + spermidine = [eIF5A protein]-deoxyhypusine + propane-1,3-diamine. It functions in the pathway protein modification; eIF5A hypusination. Functionally, catalyzes the NAD-dependent oxidative cleavage of spermidine and the subsequent transfer of the butylamine moiety of spermidine to the epsilon-amino group of a specific lysine residue of the eIF-5A precursor protein to form the intermediate deoxyhypusine residue. This is Probable deoxyhypusine synthase (dys) from Thermoplasma acidophilum (strain ATCC 25905 / DSM 1728 / JCM 9062 / NBRC 15155 / AMRC-C165).